The following is a 1062-amino-acid chain: Carbamoyl phosphate synthase large chain (1062 aa).

Positions 1–401 (MPKRTDIHKI…AMQKAVRSLE (401 aa)) are carboxyphosphate synthetic domain. Residues arginine 129, arginine 169, glycine 175, glycine 176, lysine 208, isoleucine 210, glutamate 215, glycine 241, isoleucine 242, histidine 243, glutamine 284, and glutamate 298 each contribute to the ATP site. One can recognise an ATP-grasp 1 domain in the interval 133-327 (KELCKELGEP…IAKMAAKIAI (195 aa)). Positions 284, 298, and 300 each coordinate Mg(2+). Positions 284, 298, and 300 each coordinate Mn(2+). Residues 402-546 (IDEKDLYSET…YSTYDGENES (145 aa)) form an oligomerization domain region. The segment at 547 to 929 (HKSGKKSVIV…ALYKAFAGAK (383 aa)) is carbamoyl phosphate synthetic domain. One can recognise an ATP-grasp 2 domain in the interval 671 to 861 (DQIIKKLKLN…MAQVATRVIM (191 aa)). Arginine 707, aspartate 746, leucine 748, glutamate 752, glycine 777, valine 778, histidine 779, serine 780, glutamine 820, and glutamate 832 together coordinate ATP. Mg(2+) is bound by residues glutamine 820, glutamate 832, and asparagine 834. The Mn(2+) site is built by glutamine 820, glutamate 832, and asparagine 834. The region spanning 930 to 1062 (MQLPENGNVL…NRSFATDALK (133 aa)) is the MGS-like domain. Residues 930-1062 (MQLPENGNVL…NRSFATDALK (133 aa)) form an allosteric domain region.

Belongs to the CarB family. In terms of assembly, composed of two chains; the small (or glutamine) chain promotes the hydrolysis of glutamine to ammonia, which is used by the large (or ammonia) chain to synthesize carbamoyl phosphate. Tetramer of heterodimers (alpha,beta)4. Requires Mg(2+) as cofactor. The cofactor is Mn(2+).

It carries out the reaction hydrogencarbonate + L-glutamine + 2 ATP + H2O = carbamoyl phosphate + L-glutamate + 2 ADP + phosphate + 2 H(+). The catalysed reaction is hydrogencarbonate + NH4(+) + 2 ATP = carbamoyl phosphate + 2 ADP + phosphate + 2 H(+). It functions in the pathway amino-acid biosynthesis; L-arginine biosynthesis; carbamoyl phosphate from bicarbonate: step 1/1. It participates in pyrimidine metabolism; UMP biosynthesis via de novo pathway; (S)-dihydroorotate from bicarbonate: step 1/3. Functionally, large subunit of the glutamine-dependent carbamoyl phosphate synthetase (CPSase). CPSase catalyzes the formation of carbamoyl phosphate from the ammonia moiety of glutamine, carbonate, and phosphate donated by ATP, constituting the first step of 2 biosynthetic pathways, one leading to arginine and/or urea and the other to pyrimidine nucleotides. The large subunit (synthetase) binds the substrates ammonia (free or transferred from glutamine from the small subunit), hydrogencarbonate and ATP and carries out an ATP-coupled ligase reaction, activating hydrogencarbonate by forming carboxy phosphate which reacts with ammonia to form carbamoyl phosphate. The protein is Carbamoyl phosphate synthase large chain of Lactobacillus johnsonii (strain CNCM I-12250 / La1 / NCC 533).